We begin with the raw amino-acid sequence, 348 residues long: Outer membrane protein A (348 aa).

The N-terminal stretch at 1–21 (MKKTAIAIAVALAGFATVAQA) is a signal peptide. The next 8 beta stranded transmembrane spans lie at 27 to 37 (TWYTGAKLGWS), 55 to 66 (QLGAGAFGGYQV), 70 to 78 (VGFEMGYDW), 96 to 107 (QGVQLTAKLGYP), 112 to 120 (LDIYTRLGG), 146 to 155 (PVFAGGVEYA), 160 to 167 (IATRLEYQ), and 186 to 194 (LLSLGVSYR). Residues 201–210 (APVVAPAPAP) are hinge-like. 3 consecutive repeat copies span residues 205 to 206 (AP), 207 to 208 (AP), and 209 to 210 (AP). Residues 205–210 (APAPAP) are 3 X 2 AA tandem repeats of A-P. In terms of domain architecture, OmpA-like spans 212 to 340 (VQTKHFTLKS…RVEIEVKGIK (129 aa)). A disulfide bridge links cysteine 313 with cysteine 325.

It belongs to the outer membrane OOP (TC 1.B.6) superfamily. OmpA family. In terms of assembly, monomer and homodimer. As to quaternary structure, (Microbial infection) Upon infection with phage Sf6 associates with the mature bacteriophage capsid. Was originally suggested to be within the bacteriophage capsid. This has been disproven.

The protein localises to the extracellular vesicle. The protein resides in the cell outer membrane. With TolR probably plays a role in maintaining the position of the peptidoglycan cell wall in the periplasm. Acts as a porin with low permeability that allows slow penetration of small solutes; an internal gate slows down solute passage. Functionally, required for conjugation with F-type plasmids; probably serves as the mating receptor on recipient cells. In terms of biological role, (Microbial infection) Serves as a secondary receptor during phage Sf6 infection; infection requires both lipopolysaccharide (LPS) and the OmpA beta-barrel. The polypeptide is Outer membrane protein A (Shigella flexneri).